A 330-amino-acid polypeptide reads, in one-letter code: N-acetyl-gamma-glutamyl-phosphate reductase (330 aa).

Cysteine 143 is a catalytic residue.

The protein belongs to the NAGSA dehydrogenase family. Type 1 subfamily.

The protein localises to the cytoplasm. The enzyme catalyses N-acetyl-L-glutamate 5-semialdehyde + phosphate + NADP(+) = N-acetyl-L-glutamyl 5-phosphate + NADPH + H(+). The protein operates within amino-acid biosynthesis; L-arginine biosynthesis; N(2)-acetyl-L-ornithine from L-glutamate: step 3/4. Catalyzes the NADPH-dependent reduction of N-acetyl-5-glutamyl phosphate to yield N-acetyl-L-glutamate 5-semialdehyde. The protein is N-acetyl-gamma-glutamyl-phosphate reductase of Methanocorpusculum labreanum (strain ATCC 43576 / DSM 4855 / Z).